Reading from the N-terminus, the 465-residue chain is tRNA-2-methylthio-N(6)-dimethylallyladenosine synthase (465 aa).

Residues 5-125 (RKLHIKSYGC…LPELLKRAGN (121 aa)) form the MTTase N-terminal domain. 6 residues coordinate [4Fe-4S] cluster: Cys-14, Cys-50, Cys-88, Cys-166, Cys-170, and Cys-173. The Radical SAM core domain maps to 152 to 384 (RARGISAFVT…QELIDSQQSA (233 aa)). The region spanning 387-449 (KAAIGSTVDV…RYSFLGELVT (63 aa)) is the TRAM domain.

It belongs to the methylthiotransferase family. MiaB subfamily. In terms of assembly, monomer. [4Fe-4S] cluster serves as cofactor.

The protein resides in the cytoplasm. The catalysed reaction is N(6)-dimethylallyladenosine(37) in tRNA + (sulfur carrier)-SH + AH2 + 2 S-adenosyl-L-methionine = 2-methylsulfanyl-N(6)-dimethylallyladenosine(37) in tRNA + (sulfur carrier)-H + 5'-deoxyadenosine + L-methionine + A + S-adenosyl-L-homocysteine + 2 H(+). Its function is as follows. Catalyzes the methylthiolation of N6-(dimethylallyl)adenosine (i(6)A), leading to the formation of 2-methylthio-N6-(dimethylallyl)adenosine (ms(2)i(6)A) at position 37 in tRNAs that read codons beginning with uridine. The chain is tRNA-2-methylthio-N(6)-dimethylallyladenosine synthase from Bradyrhizobium diazoefficiens (strain JCM 10833 / BCRC 13528 / IAM 13628 / NBRC 14792 / USDA 110).